The sequence spans 454 residues: Exopolyphosphatase PRUNE1 (454 aa).

Methionine 1 is subject to N-acetylmethionine. Aspartate 28, aspartate 30, aspartate 106, and aspartate 179 together coordinate Mn(2+). The DHH motif signature appears at 106-108 (DHH). Residues 394-421 (SLIAGLSQDDEDPPLPPTPMNSLVDECP) form an essential for homodimerization region. The disordered stretch occupies residues 398–421 (GLSQDDEDPPLPPTPMNSLVDECP). The residue at position 400 (serine 400) is a Phosphoserine. The residue at position 411 (threonine 411) is a Phosphothreonine. Phosphoserine is present on serine 415.

This sequence belongs to the PPase class C family. Prune subfamily. Homooligomer. Able to homodimerize via its C-terminal domain. Interacts with NME1. Interacts with GSK3; at focal adhesion complexes where paxillin and vinculin are colocalized. Interacts with alpha and beta tubulin. It depends on Mn(2+) as a cofactor.

It is found in the cytoplasm. The protein resides in the nucleus. It localises to the cell junction. The protein localises to the focal adhesion. The enzyme catalyses diphosphate + H2O = 2 phosphate + H(+). Its activity is regulated as follows. Activated by magnesium ions and inhibited by manganese ions. Inhibited by dipyridamole, moderately sensitive to IBMX and inhibited by vinpocetine. In terms of biological role, phosphodiesterase (PDE) that has higher activity toward cAMP than cGMP, as substrate. Plays a role in cell proliferation, migration and differentiation, and acts as a negative regulator of NME1. Plays a role in the regulation of neurogenesis. Involved in the regulation of microtubule polymerization. The protein is Exopolyphosphatase PRUNE1 (Prune1) of Rattus norvegicus (Rat).